Here is a 713-residue protein sequence, read N- to C-terminus: Cyclomaltodextrin glucanotransferase (713 aa).

Residues 1–27 form the signal peptide; it reads MKKISKLTTALALSLSLALSLLGPAHA. Positions 28-165 are A1; sequence APDTSVSNKQ…NIKVIIDFAP (138 aa). Positions 54, 56, 59, and 60 each coordinate Ca(2+). Cysteine 70 and cysteine 77 are oxidised to a cystine. Residues glycine 78 and aspartate 80 each coordinate Ca(2+). Substrate is bound at residue 127–128; sequence YW. Asparagine 166 is a Ca(2+) binding site. A b region spans residues 166–229; the sequence is NHTSPASLDQ…NLYDLADLNH (64 aa). A substrate-binding site is contributed by histidine 167. Isoleucine 217 contributes to the Ca(2+) binding site. 220-223 lines the substrate pocket; it reads NLYD. Aspartate 226 is a binding site for Ca(2+). The A2 stretch occupies residues 230 to 433; that stretch reads NNSTVDTYLK…LRKSNPAIAY (204 aa). Arginine 254 provides a ligand contact to substrate. Aspartate 256 acts as the Nucleophile in catalysis. A substrate-binding site is contributed by 259 to 260; that stretch reads KH. Histidine 260 contributes to the Ca(2+) binding site. Residue glutamate 284 is the Proton donor of the active site. Substrate is bound by residues histidine 354, aspartate 398, and arginine 402. The interval 434-522 is c; sequence GTTQERWINN…GTAVWQYTTA (89 aa). Residues 523–609 are d; the sequence is VTAPTIGHVG…SNVHDNFEVL (87 aa). Residues 526–607 form the IPT/TIG domain; it reads PTIGHVGPMM…TSSNVHDNFE (82 aa). Positions 608 to 713 constitute a CBM20 domain; sequence VLSGDQVSVR…TATINVNWQP (106 aa). Positions 610–713 are e; the sequence is SGDQVSVRFV…TATINVNWQP (104 aa).

Belongs to the glycosyl hydrolase 13 family. Monomer. Ca(2+) is required as a cofactor.

It localises to the secreted. The enzyme catalyses Cyclizes part of a (1-&gt;4)-alpha-D-glucan chain by formation of a (1-&gt;4)-alpha-D-glucosidic bond.. The sequence is that of Cyclomaltodextrin glucanotransferase (cgt) from Bacillus sp. (strain 17-1).